The chain runs to 192 residues: Glycerol-3-phosphate acyltransferase (192 aa).

5 consecutive transmembrane segments (helical) span residues methionine 4–leucine 24, leucine 54–serine 74, isoleucine 80–phenylalanine 100, alanine 112–leucine 132, and leucine 154–valine 174.

Belongs to the PlsY family. As to quaternary structure, probably interacts with PlsX.

The protein localises to the cell inner membrane. The enzyme catalyses an acyl phosphate + sn-glycerol 3-phosphate = a 1-acyl-sn-glycero-3-phosphate + phosphate. It participates in lipid metabolism; phospholipid metabolism. In terms of biological role, catalyzes the transfer of an acyl group from acyl-phosphate (acyl-PO(4)) to glycerol-3-phosphate (G3P) to form lysophosphatidic acid (LPA). This enzyme utilizes acyl-phosphate as fatty acyl donor, but not acyl-CoA or acyl-ACP. This Pseudomonas syringae pv. syringae (strain B728a) protein is Glycerol-3-phosphate acyltransferase.